The following is a 171-amino-acid chain: Protein TIFY 11d (171 aa).

A Tify domain is found at 65–100; the sequence is PSAGTAPLTIFYDGRMVVVDDVPAEKAAELMRLAGS. Positions 117–142 match the Jas motif; sequence PIARKASLQRFLQKRKHRITTTSEPY. The Nuclear localization signal motif lies at 119–126; that stretch reads ARKASLQR.

This sequence belongs to the TIFY/JAZ family. In terms of assembly, interacts with BHLH148 and COI1A. Interacts with COI1A, COI1B and COI2 in a coronatine-dependent manner. Coronatine is an analog of jasmonoyl isoleucine (JA-Ile). Ubiquitinated. Increase in jasmonoyl isoleucine (JA-Ile) levels mediates its degradation via COI1A-mediated proteasome pathway.

It is found in the nucleus. Functionally, repressor of jasmonate (JA) responses. May act on an initial response of JA-regulated gene expression toward drought tolerance as part of a BHLH148-TIFY11D/JAZ12-COI1A complex. This is Protein TIFY 11d from Oryza sativa subsp. indica (Rice).